We begin with the raw amino-acid sequence, 490 residues long: Cobyric acid synthase (490 aa).

A GATase cobBQ-type domain is found at 252–439; that stretch reads RLKVVVPVLP…LHGLFESTAA (188 aa). The Nucleophile role is filled by Cys333. His431 is an active-site residue.

Belongs to the CobB/CobQ family. CobQ subfamily.

It functions in the pathway cofactor biosynthesis; adenosylcobalamin biosynthesis. Functionally, catalyzes amidations at positions B, D, E, and G on adenosylcobyrinic A,C-diamide. NH(2) groups are provided by glutamine, and one molecule of ATP is hydrogenolyzed for each amidation. The sequence is that of Cobyric acid synthase from Pseudomonas aeruginosa (strain LESB58).